The sequence spans 739 residues: Adenosylcobalamin-dependent ribonucleoside-triphosphate reductase (739 aa).

A disulfide bond links cysteine 119 and cysteine 419. Positions 147 to 158 are effector region-1; sequence SMPFSFLFDELM. The tract at residues 168–313 is effector region-2; sequence ARSNISQIPR…ICNLIGKAVV (146 aa). Active-site residues include cysteine 408 and glutamate 410. Positions 565–626 are adenosylcobalamin-binding-1; it reads FHYGAYLIQR…NPNFASAGTV (62 aa). The adenosylcobalamin-binding-2 stretch occupies residues 685–724; the sequence is LQQAPKEPIDKETYEKRSQEITGNVEEVFSQLNSDVKDLE.

This sequence belongs to the class II ribonucleoside-triphosphate reductase family. As to quaternary structure, monomer. The cofactor is adenosylcob(III)alamin.

The enzyme catalyses a 2'-deoxyribonucleoside 5'-triphosphate + [thioredoxin]-disulfide + H2O = a ribonucleoside 5'-triphosphate + [thioredoxin]-dithiol. With respect to regulation, allosterically regulated by ATP and dNTP. This is Adenosylcobalamin-dependent ribonucleoside-triphosphate reductase (rtpR) from Lactobacillus leichmannii.